The primary structure comprises 180 residues: Interleukin-17B (180 aa).

An N-terminal signal peptide occupies residues 1–22 (MDWPHSLLFLLAISIFLAPSHP). A disordered region spans residues 22-44 (PRNTKGKRKGQGRPSPLAPGPHQ). Residues 23-32 (RNTKGKRKGQ) show a composition bias toward basic residues. A glycan (N-linked (GlcNAc...) asparagine) is linked at Asn75. 2 disulfide bridges follow: Cys121-Cys176 and Cys126-Cys178.

It belongs to the IL-17 family.

The protein localises to the secreted. Functionally, stimulates the release of tumor necrosis factor alpha and IL-1-beta from the monocytic cell line THP-1. The chain is Interleukin-17B (Il17b) from Mus musculus (Mouse).